The following is an 83-amino-acid chain: Small ribosomal subunit protein bS16 (83 aa).

Belongs to the bacterial ribosomal protein bS16 family.

In Magnetococcus marinus (strain ATCC BAA-1437 / JCM 17883 / MC-1), this protein is Small ribosomal subunit protein bS16.